Here is a 466-residue protein sequence, read N- to C-terminus: Ribulose bisphosphate carboxylase large chain (466 aa).

An N6,N6,N6-trimethyllysine modification is found at K4. Substrate is bound by residues N113 and T163. The active-site Proton acceptor is the K165. K167 contributes to the substrate binding site. Mg(2+)-binding residues include K191, D193, and E194. Residue K191 is modified to N6-carboxylysine. The active-site Proton acceptor is the H284. Residues R285, H317, and S369 each coordinate substrate.

Belongs to the RuBisCO large chain family. Type I subfamily. As to quaternary structure, heterohexadecamer of 8 large chains and 8 small chains; disulfide-linked. The disulfide link is formed within the large subunit homodimers. Requires Mg(2+) as cofactor. In terms of processing, the disulfide bond which can form in the large chain dimeric partners within the hexadecamer appears to be associated with oxidative stress and protein turnover.

It localises to the plastid. It is found in the chloroplast. It carries out the reaction 2 (2R)-3-phosphoglycerate + 2 H(+) = D-ribulose 1,5-bisphosphate + CO2 + H2O. The catalysed reaction is D-ribulose 1,5-bisphosphate + O2 = 2-phosphoglycolate + (2R)-3-phosphoglycerate + 2 H(+). Functionally, ruBisCO catalyzes two reactions: the carboxylation of D-ribulose 1,5-bisphosphate, the primary event in carbon dioxide fixation, as well as the oxidative fragmentation of the pentose substrate in the photorespiration process. Both reactions occur simultaneously and in competition at the same active site. The polypeptide is Ribulose bisphosphate carboxylase large chain (Aphelandra sinclairiana (Orange shrimp plant)).